We begin with the raw amino-acid sequence, 285 residues long: uncharacterized protein (285 aa).

Disordered stretches follow at residues Ala115–Asn139 and Glu152–Val183. Basic and acidic residues-rich tracts occupy residues Lys128–Arg138 and Glu152–Thr170.

This is an uncharacterized protein from Escherichia coli (strain K12).